The following is a 427-amino-acid chain: 3-phosphoshikimate 1-carboxyvinyltransferase (427 aa).

3 residues coordinate 3-phosphoshikimate: Lys22, Ser23, and Arg27. Lys22 is a phosphoenolpyruvate binding site. Residues Gly96 and Arg124 each coordinate phosphoenolpyruvate. Positions 169, 170, 171, 197, 313, 336, and 340 each coordinate 3-phosphoshikimate. Phosphoenolpyruvate is bound at residue Gln171. Catalysis depends on Asp313, which acts as the Proton acceptor. Residues Arg344, Arg386, and Lys411 each coordinate phosphoenolpyruvate.

Belongs to the EPSP synthase family. Monomer.

It is found in the cytoplasm. The enzyme catalyses 3-phosphoshikimate + phosphoenolpyruvate = 5-O-(1-carboxyvinyl)-3-phosphoshikimate + phosphate. It participates in metabolic intermediate biosynthesis; chorismate biosynthesis; chorismate from D-erythrose 4-phosphate and phosphoenolpyruvate: step 6/7. Its function is as follows. Catalyzes the transfer of the enolpyruvyl moiety of phosphoenolpyruvate (PEP) to the 5-hydroxyl of shikimate-3-phosphate (S3P) to produce enolpyruvyl shikimate-3-phosphate and inorganic phosphate. In Citrobacter koseri (strain ATCC BAA-895 / CDC 4225-83 / SGSC4696), this protein is 3-phosphoshikimate 1-carboxyvinyltransferase.